The following is a 515-amino-acid chain: Maturase K (515 aa).

This sequence belongs to the intron maturase 2 family. MatK subfamily.

It localises to the plastid. It is found in the chloroplast. Functionally, usually encoded in the trnK tRNA gene intron. Probably assists in splicing its own and other chloroplast group II introns. The protein is Maturase K of Pinus elliottii (Slash pine).